The sequence spans 294 residues: Tetraspanin-15 (294 aa).

The Cytoplasmic portion of the chain corresponds to 1–23 (MPRGDSEQVRYCARFSYLWLKFS). Residues 24–44 (LIIYSTVFWLIGALVLSVGIY) traverse the membrane as a helical segment. The Extracellular segment spans residues 45–62 (AEVERQKYKTLESAFLAP). The chain crosses the membrane as a helical span at residues 63–83 (AIILILLGVVMFMVSFIGVLA). The Cytoplasmic segment spans residues 84 to 93 (SLRDNLYLLQ). The helical transmembrane segment at 94 to 114 (AFMYILGICLIMELIGGVVAL) threads the bilayer. Topologically, residues 115–235 (TFRNQTIDFL…WFMDNYTIMA (121 aa)) are extracellular. Asparagine 118 is a glycosylation site (N-linked (GlcNAc...) asparagine). 4 disulfides stabilise this stretch: cysteine 154/cysteine 219, cysteine 155/cysteine 185, cysteine 171/cysteine 179, and cysteine 186/cysteine 198. N-linked (GlcNAc...) asparagine glycans are attached at residues asparagine 189 and asparagine 230. The helical transmembrane segment at 236-256 (GILLGILLPQFLGVLLTLLYI) threads the bilayer. Topologically, residues 257 to 294 (TRVEDIIMEHSVTDGLLGPGAKPSVEAAGTGCCLCYPN) are cytoplasmic.

It belongs to the tetraspanin (TM4SF) family. As to quaternary structure, interacts with ADAM10; the interaction influences ADAM10 substrate specificity, endocytosis and turnover. Palmitoylated.

Its subcellular location is the cell membrane. The protein resides in the late endosome membrane. In terms of biological role, part of TspanC8 subgroup, composed of 6 members that interact with the transmembrane metalloprotease ADAM10. This interaction is required for ADAM10 exit from the endoplasmic reticulum and for enzymatic maturation and trafficking to the cell surface as well as substrate specificity. Different TspanC8/ADAM10 complexes have distinct substrates. Promotes ADAM10-mediated cleavage of CDH2. Negatively regulates ligand-induced Notch activity probably by regulating ADAM10 activity. This chain is Tetraspanin-15, found in Homo sapiens (Human).